A 283-amino-acid chain; its full sequence is Aquaporin PIP2-5 (283 aa).

The next 2 membrane-spanning stretches (helical) occupy residues 37–57 (AVIA…ATVI) and 74–94 (CGGV…FILV). Residues 106–108 (NPA) carry the NPA 1 motif. 3 consecutive transmembrane segments (helical) span residues 125–145 (ILYI…VKGF), 167–187 (GTGL…VFSA), and 199–219 (VPVL…LATI). Residues 227–229 (NPA) carry the NPA 2 motif. A helical membrane pass occupies residues 249-269 (IFWVGPFIGAAIAALYHQIVL).

It belongs to the MIP/aquaporin (TC 1.A.8) family. PIP (TC 1.A.8.11) subfamily. As to expression, expressed in roots.

The protein localises to the cell membrane. Its function is as follows. Water channel required to facilitate the transport of water across cell membrane. May play a role in root water uptake. The protein is Aquaporin PIP2-5 (PIP2-5) of Oryza sativa subsp. japonica (Rice).